The sequence spans 236 residues: tRNA1(Val) (adenine(37)-N6)-methyltransferase (236 aa).

This sequence belongs to the methyltransferase superfamily. tRNA (adenine-N(6)-)-methyltransferase family.

It is found in the cytoplasm. The catalysed reaction is adenosine(37) in tRNA1(Val) + S-adenosyl-L-methionine = N(6)-methyladenosine(37) in tRNA1(Val) + S-adenosyl-L-homocysteine + H(+). Functionally, specifically methylates the adenine in position 37 of tRNA(1)(Val) (anticodon cmo5UAC). The polypeptide is tRNA1(Val) (adenine(37)-N6)-methyltransferase (Aeromonas salmonicida (strain A449)).